A 941-amino-acid chain; its full sequence is Isoleucine--tRNA ligase (941 aa).

A 'HIGH' region motif is present at residues 59–69 (PYANGNIHIGH). Residue E562 coordinates L-isoleucyl-5'-AMP. The 'KMSKS' region signature appears at 603–607 (KMSKS). Position 606 (K606) interacts with ATP. C904, C907, C924, and C927 together coordinate Zn(2+).

This sequence belongs to the class-I aminoacyl-tRNA synthetase family. IleS type 1 subfamily. As to quaternary structure, monomer. The cofactor is Zn(2+).

The protein resides in the cytoplasm. It catalyses the reaction tRNA(Ile) + L-isoleucine + ATP = L-isoleucyl-tRNA(Ile) + AMP + diphosphate. Its function is as follows. Catalyzes the attachment of isoleucine to tRNA(Ile). As IleRS can inadvertently accommodate and process structurally similar amino acids such as valine, to avoid such errors it has two additional distinct tRNA(Ile)-dependent editing activities. One activity is designated as 'pretransfer' editing and involves the hydrolysis of activated Val-AMP. The other activity is designated 'posttransfer' editing and involves deacylation of mischarged Val-tRNA(Ile). The chain is Isoleucine--tRNA ligase from Haemophilus influenzae (strain 86-028NP).